A 1416-amino-acid polypeptide reads, in one-letter code: DNA-directed RNA polymerase subunit beta' (1416 aa).

Positions 68, 70, 83, and 86 each coordinate Zn(2+). Asp458, Asp460, and Asp462 together coordinate Mg(2+). Positions 811, 884, 891, and 894 each coordinate Zn(2+).

This sequence belongs to the RNA polymerase beta' chain family. In terms of assembly, the RNAP catalytic core consists of 2 alpha, 1 beta, 1 beta' and 1 omega subunit. When a sigma factor is associated with the core the holoenzyme is formed, which can initiate transcription. Mg(2+) serves as cofactor. Requires Zn(2+) as cofactor.

It catalyses the reaction RNA(n) + a ribonucleoside 5'-triphosphate = RNA(n+1) + diphosphate. DNA-dependent RNA polymerase catalyzes the transcription of DNA into RNA using the four ribonucleoside triphosphates as substrates. The protein is DNA-directed RNA polymerase subunit beta' of Francisella philomiragia subsp. philomiragia (strain ATCC 25017 / CCUG 19701 / FSC 153 / O#319-036).